The chain runs to 461 residues: tRNA modification GTPase MnmE (461 aa).

The (6S)-5-formyl-5,6,7,8-tetrahydrofolate site is built by Arg22, Glu87, and Arg126. Residues 222–382 enclose the TrmE-type G domain; it reads GLKTVIVGKP…LEETIFNMVV (161 aa). Asn232 is a binding site for K(+). Residues 232–237, 251–257, and 276–279 contribute to the GTP site; these read NVGKSS, TDIPGTT, and DTAG. Ser236 is a Mg(2+) binding site. K(+) is bound by residues Thr251, Ile253, and Thr256. Position 257 (Thr257) interacts with Mg(2+). Lys461 serves as a coordination point for (6S)-5-formyl-5,6,7,8-tetrahydrofolate.

It belongs to the TRAFAC class TrmE-Era-EngA-EngB-Septin-like GTPase superfamily. TrmE GTPase family. Homodimer. Heterotetramer of two MnmE and two MnmG subunits. The cofactor is K(+).

Its subcellular location is the cytoplasm. Its function is as follows. Exhibits a very high intrinsic GTPase hydrolysis rate. Involved in the addition of a carboxymethylaminomethyl (cmnm) group at the wobble position (U34) of certain tRNAs, forming tRNA-cmnm(5)s(2)U34. The protein is tRNA modification GTPase MnmE of Desulforamulus reducens (strain ATCC BAA-1160 / DSM 100696 / MI-1) (Desulfotomaculum reducens).